An 890-amino-acid polypeptide reads, in one-letter code: Alanine--tRNA ligase (890 aa).

Zn(2+)-binding residues include H568, H572, C680, and H684.

The protein belongs to the class-II aminoacyl-tRNA synthetase family. The cofactor is Zn(2+).

It is found in the cytoplasm. It catalyses the reaction tRNA(Ala) + L-alanine + ATP = L-alanyl-tRNA(Ala) + AMP + diphosphate. Functionally, catalyzes the attachment of alanine to tRNA(Ala) in a two-step reaction: alanine is first activated by ATP to form Ala-AMP and then transferred to the acceptor end of tRNA(Ala). Also edits incorrectly charged Ser-tRNA(Ala) and Gly-tRNA(Ala) via its editing domain. The protein is Alanine--tRNA ligase of Psychrobacter arcticus (strain DSM 17307 / VKM B-2377 / 273-4).